A 312-amino-acid polypeptide reads, in one-letter code: Ribosomal RNA small subunit methyltransferase H (312 aa).

Residues 33–35 (GGY), aspartate 51, phenylalanine 78, aspartate 97, and glutamine 104 each bind S-adenosyl-L-methionine.

Belongs to the methyltransferase superfamily. RsmH family.

It is found in the cytoplasm. It catalyses the reaction cytidine(1402) in 16S rRNA + S-adenosyl-L-methionine = N(4)-methylcytidine(1402) in 16S rRNA + S-adenosyl-L-homocysteine + H(+). In terms of biological role, specifically methylates the N4 position of cytidine in position 1402 (C1402) of 16S rRNA. This chain is Ribosomal RNA small subunit methyltransferase H, found in Orientia tsutsugamushi (strain Boryong) (Rickettsia tsutsugamushi).